A 1132-amino-acid chain; its full sequence is Phytochrome B (1132 aa).

Positions 1 to 11 (MASGSRTKHSH) are enriched in basic residues. Positions 1 to 27 (MASGSRTKHSHQSGQGQVQAQSSGTSN) are disordered. Residues 12 to 26 (QSGQGQVQAQSSGTS) show a composition bias toward low complexity. The 179-residue stretch at 231 to 409 (DVKLLCDTVV…AFGLQLNMEL (179 aa)) folds into the GAF domain. Cys336 contacts phytochromobilin. PAS domains are found at residues 623–694 (VARE…LRGE) and 757–828 (DYKA…MIVL). The region spanning 905 to 1125 (YLCQEIKSPL…LIILDLPMTR (221 aa)) is the Histidine kinase domain.

It belongs to the phytochrome family. Homodimer. Contains one covalently linked phytochromobilin chromophore.

Its function is as follows. Regulatory photoreceptor which exists in two forms that are reversibly interconvertible by light: the Pr form that absorbs maximally in the red region of the spectrum and the Pfr form that absorbs maximally in the far-red region. Photoconversion of Pr to Pfr induces an array of morphogenic responses, whereas reconversion of Pfr to Pr cancels the induction of those responses. Pfr controls the expression of a number of nuclear genes including those encoding the small subunit of ribulose-bisphosphate carboxylase, chlorophyll A/B binding protein, protochlorophyllide reductase, rRNA, etc. It also controls the expression of its own gene(s) in a negative feedback fashion. This Nicotiana tabacum (Common tobacco) protein is Phytochrome B (PHYB).